Here is a 460-residue protein sequence, read N- to C-terminus: Biphenyl 2,3-dioxygenase subunit alpha (460 aa).

The Rieske domain occupies 56-165 (WLLMGHETQI…VETYKGLIFA (110 aa)). Residues cysteine 98, histidine 100, cysteine 118, and histidine 121 each coordinate [2Fe-2S] cluster. Position 217 to 230 (217 to 230 (QFCSDMYHAGTTSH)) interacts with substrate. Residues histidine 224, histidine 230, and aspartate 378 each coordinate Fe cation.

The protein belongs to the bacterial ring-hydroxylating dioxygenase alpha subunit family. As to quaternary structure, heterohexamer consisting of three BphA1 subunits and three BphA2 subunits. The multicomponent biphenyl dioxygenase system is composed of a ferredoxin reductase (BphA4), a ferredoxin (BphA3), and a terminal oxygenase (BphA1A2). Requires [2Fe-2S] cluster as cofactor. The cofactor is Fe cation.

The enzyme catalyses biphenyl + NADH + O2 + H(+) = (2R,3S)-3-phenylcyclohexa-3,5-diene-1,2-diol + NAD(+). The protein operates within xenobiotic degradation; biphenyl degradation; 2-hydroxy-2,4-pentadienoate and benzoate from biphenyl: step 1/4. Part of the oxygenase component of the biphenyl dioxygenase system that catalyzes the stereospecific dihydroxylation of the aromatic ring of biphenyl, yielding a dihydrodiol compound. Is essential for biphenyl degradation and growth of Rhodococcus sp. strain RHA1 on biphenyl as the sole source of carbon and energy. Can also use naphtalene and 4-chlorobiphenyl (4-CB) as substrates, as well as some polychlorinated biphenyls (PCB) such as 2,2'-dichlorobiphenyl, 2,3-dichlorobiphenyl and 2,5,2'-trichlorobiphenyl. Exhibits weak activity toward dibenzofuran and dibenzo-p-dioxin. Electrons are transferred from NADH to the [2Fe-2S] cluster in BphA1 via FAD of BphA4 and [2Fe-2S] cluster of BphA3. This Rhodococcus jostii (strain RHA1) protein is Biphenyl 2,3-dioxygenase subunit alpha.